The primary structure comprises 1043 residues: Non-canonical nonribosomal peptide synthetase cpsA (1043 aa).

Residues arginine 41 to tyrosine 386 are adenylation (A) domain. One can recognise a Carrier domain in the interval glutamine 549–glycine 626. O-(pantetheine 4'-phosphoryl)serine is present on serine 586. The interval methionine 671–alanine 914 is short-chain dehydrogenase/reductase (R) domain. Positions threonine 672 to isoleucine 915 constitute a Thioester reductase (TE) domain.

Belongs to the NRP synthetase family. It depends on pantetheine 4'-phosphate as a cofactor.

The enzyme catalyses L-valine + ATP + NADPH + H(+) = L-valinal + AMP + diphosphate + NADP(+). The catalysed reaction is L-tryptophan + ATP + NADPH + H(+) = L-tryptophanal + AMP + diphosphate + NADP(+). It participates in alkaloid biosynthesis. Its function is as follows. Non-canonical nonribosomal peptide synthetase; part of the gene cluster that mediates the biosynthesis of campesine G, a dimeric indole piperazine alkaloid that shows good insecticidal activity Galleria mellonella. CpsA catalyzes the first steps of the pathway by producing L-tryptophanal and L-valinal from their respective amino-acids. These products condensate spontaneously to form trypyl-valyl pyrazine also known as didehydrocampesine A. The NmrA-like family domain-containing oxidoreductase cpsB is the next enzyme in cps pathway and reduces the unstable didehydrocampesine A to campesine A. The methyltransferase cpsF and the acetyltransferase cpsE both recognize N13 of piperazine ring to carry out methylation and acetylation of campesine A to produce campesine C and B, respectively. The cytochrome P450 monooxygenase cpsD then acts as a dimerase that catalyzes oxidative heterocoupling between campesine B and C to produce heterodimers with unexpected 6/5/6/6/6/6/5/6 eight-ring scaffold called campesine D. Finally,the cytochrome P450 monooxygenase cpsC is a regioselective dehydrogenase that catalyzes dehydrogenation reaction towards C2-N1 to produce campesine G. This is Non-canonical nonribosomal peptide synthetase cpsA from Aspergillus campestris (strain IBT 28561).